Here is a 72-residue protein sequence, read N- to C-terminus: uncharacterized protein (72 aa).

The helical transmembrane segment at 41-58 (FSFLVHIMCGLTLTSYVI) threads the bilayer.

The protein localises to the membrane. This is an uncharacterized protein from Dictyostelium discoideum (Social amoeba).